A 120-amino-acid polypeptide reads, in one-letter code: Large ribosomal subunit protein bL21 (120 aa).

This sequence belongs to the bacterial ribosomal protein bL21 family. Part of the 50S ribosomal subunit. Contacts protein L20.

This protein binds to 23S rRNA in the presence of protein L20. In Rhizorhabdus wittichii (strain DSM 6014 / CCUG 31198 / JCM 15750 / NBRC 105917 / EY 4224 / RW1) (Sphingomonas wittichii), this protein is Large ribosomal subunit protein bL21.